Reading from the N-terminus, the 162-residue chain is Nucleotide-binding protein Anae109_0095 (162 aa).

Belongs to the YajQ family.

Functionally, nucleotide-binding protein. The polypeptide is Nucleotide-binding protein Anae109_0095 (Anaeromyxobacter sp. (strain Fw109-5)).